We begin with the raw amino-acid sequence, 190 residues long: RNA pyrophosphohydrolase (190 aa).

Positions 6-149 (GYRPNVGIIL…KRDVYTQALN (144 aa)) constitute a Nudix hydrolase domain. Positions 38-59 (GGIKYGESPVQAMYRELHEEVG) match the Nudix box motif. A disordered region spans residues 167-190 (QRVHGPRSTDSPSSETDGHAHIAG).

This sequence belongs to the Nudix hydrolase family. RppH subfamily. A divalent metal cation serves as cofactor.

Its function is as follows. Accelerates the degradation of transcripts by removing pyrophosphate from the 5'-end of triphosphorylated RNA, leading to a more labile monophosphorylated state that can stimulate subsequent ribonuclease cleavage. The protein is RNA pyrophosphohydrolase of Bordetella pertussis (strain Tohama I / ATCC BAA-589 / NCTC 13251).